The following is a 116-amino-acid chain: Large ribosomal subunit protein uL18 (116 aa).

Belongs to the universal ribosomal protein uL18 family. As to quaternary structure, part of the 50S ribosomal subunit; part of the 5S rRNA/L5/L18/L25 subcomplex. Contacts the 5S and 23S rRNAs.

This is one of the proteins that bind and probably mediate the attachment of the 5S RNA into the large ribosomal subunit, where it forms part of the central protuberance. The protein is Large ribosomal subunit protein uL18 of Shewanella frigidimarina (strain NCIMB 400).